A 598-amino-acid chain; its full sequence is Glutamyl-tRNA(Gln) amidotransferase subunit E (598 aa).

It belongs to the GatB/GatE family. GatE subfamily. As to quaternary structure, heterodimer of GatD and GatE.

The enzyme catalyses L-glutamyl-tRNA(Gln) + L-glutamine + ATP + H2O = L-glutaminyl-tRNA(Gln) + L-glutamate + ADP + phosphate + H(+). Its function is as follows. Allows the formation of correctly charged Gln-tRNA(Gln) through the transamidation of misacylated Glu-tRNA(Gln) in organisms which lack glutaminyl-tRNA synthetase. The reaction takes place in the presence of glutamine and ATP through an activated gamma-phospho-Glu-tRNA(Gln). The GatDE system is specific for glutamate and does not act on aspartate. This is Glutamyl-tRNA(Gln) amidotransferase subunit E from Thermoplasma volcanium (strain ATCC 51530 / DSM 4299 / JCM 9571 / NBRC 15438 / GSS1).